Here is a 596-residue protein sequence, read N- to C-terminus: MTVEQNLEALDQFPVGMRVLAVDDDQTCLKILESLLRHCQYHVTTTNQAQKALELLRENKNKFDLVISDVDMPDMDGFKLLELVGLEMDLPVIMLSAHSDPKYVMKGVTHGACDYLLKPVRIEELKNIWQHVVRSRFDKNRGSNNNGDKRDGSGNEGVGNSDQNNGKGNRKRKDQYNEDEDEDRDDNDDSCAQKKQRVVWTVELHKKFVAAVNQLGYEKAMPKKILDLMNVEKLTRENVASHLQKFRLYLKRISGVANQQAIMANSELHFMQMNGLDGFHHRPIPVGSGQYHGGAPAMRSFPPNGILGRLNTPSGIGVRSLSSPPAGMFLQNQTDIGKFHHVSSLPLNHSDGGNILQGLPMPLEFDQLQTNNNKSRNMNSNKSIAGTSMAFPSFSTQQNSLISAPNNNVVVLEGHPQATPPGFPGHQINKRLEHWSNAVSSSTHPPPPAHNSNSINHQFDVSPLPHSRPDPLEWNNVSSSYSIPFCDSANTLSSPALDTTNPRAFCRNTDFDSNTNVQPGVFYGPSTDAMALLSSSNPKEGFVVGQQKLQSGGFMVADAGSLDDIVNSTMKQEQSQGDLSGGDLGYGGFSSLRTCI.

In terms of domain architecture, Response regulatory spans 18–133 (RVLAVDDDQT…ELKNIWQHVV (116 aa)). Aspartate 69 is subject to 4-aspartylphosphate. The segment covering 138-153 (DKNRGSNNNGDKRDGS) has biased composition (basic and acidic residues). A disordered region spans residues 138-192 (DKNRGSNNNGDKRDGSGNEGVGNSDQNNGKGNRKRKDQYNEDEDEDRDDNDDSCA). Polar residues predominate over residues 158–167 (VGNSDQNNGK). The span at 177 to 189 (NEDEDEDRDDNDD) shows a compositional bias: acidic residues. A Nuclear localization signal motif is present at residues 194–197 (KKQR). Residues 197-247 (RVVWTVELHKKFVAAVNQLGYEKAMPKKILDLMNVEKLTRENVASHLQKFR) constitute a DNA-binding region (myb-like GARP). The tract at residues 437-467 (NAVSSSTHPPPPAHNSNSINHQFDVSPLPHS) is disordered. Residues 450-459 (HNSNSINHQF) are compositionally biased toward polar residues.

This sequence belongs to the ARR family. Type-B subfamily. In terms of assembly, binds the target DNA as a monomer. In terms of processing, two-component system major event consists of a His-to-Asp phosphorelay between a sensor histidine kinase (HK) and a response regulator (RR). In plants, the His-to-Asp phosphorelay involves an additional intermediate named Histidine-containing phosphotransfer protein (HPt). This multistep phosphorelay consists of a His-Asp-His-Asp sequential transfer of a phosphate group between first a His and an Asp of the HK protein, followed by the transfer to a conserved His of the HPt protein and finally the transfer to an Asp in the receiver domain of the RR protein. In terms of tissue distribution, detected in the whole plant. Predominantly expressed in leaves. Expressed at the root transition zone.

The protein resides in the nucleus. In terms of biological role, transcriptional activator that binds specifically to the DNA sequence 5'-[AG]GATT-3'. Functions as a response regulator involved in His-to-Asp phosphorelay signal transduction system. Phosphorylation of the Asp residue in the receiver domain activates the ability of the protein to promote the transcription of target genes. Could directly activate some type-A response regulators in response to cytokinins. Involved in the root-meristem size determination through the regulation of cell differentiation. Involved in activating SHY2 during meristem growth and controls PIN expression via activation of SHY2. This chain is Two-component response regulator ARR12 (ARR12), found in Arabidopsis thaliana (Mouse-ear cress).